Consider the following 357-residue polypeptide: tRNA N6-adenosine threonylcarbamoyltransferase (357 aa).

Fe cation is bound by residues H115 and H119. Substrate is bound by residues 137–141 (LASGG), D170, G183, and N281. Fe cation is bound at residue D309.

It belongs to the KAE1 / TsaD family. Requires Fe(2+) as cofactor.

The protein resides in the cytoplasm. It catalyses the reaction L-threonylcarbamoyladenylate + adenosine(37) in tRNA = N(6)-L-threonylcarbamoyladenosine(37) in tRNA + AMP + H(+). Its function is as follows. Required for the formation of a threonylcarbamoyl group on adenosine at position 37 (t(6)A37) in tRNAs that read codons beginning with adenine. Is involved in the transfer of the threonylcarbamoyl moiety of threonylcarbamoyl-AMP (TC-AMP) to the N6 group of A37, together with TsaE and TsaB. TsaD likely plays a direct catalytic role in this reaction. The chain is tRNA N6-adenosine threonylcarbamoyltransferase from Afipia carboxidovorans (strain ATCC 49405 / DSM 1227 / KCTC 32145 / OM5) (Oligotropha carboxidovorans).